Reading from the N-terminus, the 345-residue chain is Ferrochelatase (345 aa).

2 residues coordinate Fe cation: H215 and E296.

The protein belongs to the ferrochelatase family.

It localises to the cytoplasm. The enzyme catalyses heme b + 2 H(+) = protoporphyrin IX + Fe(2+). The protein operates within porphyrin-containing compound metabolism; protoheme biosynthesis; protoheme from protoporphyrin-IX: step 1/1. Functionally, catalyzes the ferrous insertion into protoporphyrin IX. In Rhodopseudomonas palustris (strain ATCC BAA-98 / CGA009), this protein is Ferrochelatase.